The chain runs to 130 residues: MENSQTGVLCPNRCQVCSHTTYIRESSGQGGRQACRFTRFVTQPRVVSEQGIQYRSWLSDRGFPATLLSTSGGLSTTIRGHGVAVTIQGDSKSLLNFCRVAYDVFHHPVVQSEVCHGSGPATSDEITTKF.

Acts as a suppressor of RNA-mediated gene silencing, also known as post-transcriptional gene silencing (PTGS), a mechanism of plant viral defense that limits the accumulation of viral RNAs. Binds to dsRNAs without size specificity. The protein is RNA silencing suppressor p14 of Pothos latent virus (isolate Pigeonpea/India) (PoLV).